The sequence spans 1481 residues: Nucleoporin NUP159 (1481 aa).

WD repeat units follow at residues 106–146 (PLPL…QGNT) and 201–241 (TLRS…AHIP). PXFG repeat units follow at residues 483–486 (PTFG), 493–496 (PAFG), 519–522 (PTFG), 524–527 (PSFG), 532–535 (PAFG), and 559–562 (PAFG). The span at 607-616 (GSSIFSSKPG) shows a compositional bias: low complexity. 2 disordered regions span residues 607–647 (GSSI…PAFG) and 662–991 (TAAH…SLGG). Residues 644 to 647 (PAFG) form a PXFG 7 repeat. Over residues 663–677 (AAHDIEKPKEGESKS) the composition is skewed to basic and acidic residues. 2 stretches are compositionally biased toward polar residues: residues 724-734 (FESTTPTTTPA) and 741-763 (KTTT…SSMP). Basic and acidic residues predominate over residues 773–794 (SAEKPKSIFDTLKPKEESKENL). Residues 814 to 833 (PGSSSSESAESSPGAAAKAA) show a composition bias toward low complexity. Basic and acidic residues-rich tracts occupy residues 837–850 (GNDE…ELAP) and 862–877 (VKAK…KAEE). The segment covering 903–955 (ASEEEQGQAEEEEAESGEEEEEEEEEGEGEEEEEEEEEEEEEEEEGEEGEEQS) has biased composition (acidic residues). 2 coiled-coil regions span residues 903–957 (ASEE…QSEA) and 1233–1318 (MAAI…AARG). The Bipartite nuclear localization signal motif lies at 1345 to 1352 (EKRSGDID). Disordered regions lie at residues 1385–1404 (ATPG…TPQS) and 1414–1443 (GSVG…MYTA). The short motif at 1435–1442 (KKKLSMYT) is the Bipartite nuclear localization signal element.

As to quaternary structure, component of the nuclear pore complex (NPC). NPC constitutes the exclusive means of nucleocytoplasmic transport. NPCs allow the passive diffusion of ions and small molecules and the active, nuclear transport receptor-mediated bidirectional transport of macromolecules such as proteins, RNAs, ribonucleoparticles (RNPs), and ribosomal subunits across the nuclear envelope. Due to its 8-fold rotational symmetry, all subunits are present with 8 copies or multiples thereof.

The protein localises to the nucleus. The protein resides in the nuclear pore complex. Its subcellular location is the nucleus membrane. Functions as a component of the nuclear pore complex (NPC). NPC components, collectively referred to as nucleoporins (NUPs), can play the role of both NPC structural components and of docking or interaction partners for transiently associated nuclear transport factors. Active directional transport is assured by both, a Phe-Gly (FG) repeat affinity gradient for these transport factors across the NPC and a transport cofactor concentration gradient across the nuclear envelope (GSP1 and GSP2 GTPases associated predominantly with GTP in the nucleus, with GDP in the cytoplasm). NUP159 plays an important role in several nuclear export pathways including poly(A)+ RNA, pre-ribosome, and protein export. This Chaetomium thermophilum (strain DSM 1495 / CBS 144.50 / IMI 039719) (Thermochaetoides thermophila) protein is Nucleoporin NUP159 (NUP159).